We begin with the raw amino-acid sequence, 480 residues long: Aspartyl/glutamyl-tRNA(Asn/Gln) amidotransferase subunit B (480 aa).

The protein belongs to the GatB/GatE family. GatB subfamily. In terms of assembly, heterotrimer of A, B and C subunits.

The enzyme catalyses L-glutamyl-tRNA(Gln) + L-glutamine + ATP + H2O = L-glutaminyl-tRNA(Gln) + L-glutamate + ADP + phosphate + H(+). The catalysed reaction is L-aspartyl-tRNA(Asn) + L-glutamine + ATP + H2O = L-asparaginyl-tRNA(Asn) + L-glutamate + ADP + phosphate + 2 H(+). In terms of biological role, allows the formation of correctly charged Asn-tRNA(Asn) or Gln-tRNA(Gln) through the transamidation of misacylated Asp-tRNA(Asn) or Glu-tRNA(Gln) in organisms which lack either or both of asparaginyl-tRNA or glutaminyl-tRNA synthetases. The reaction takes place in the presence of glutamine and ATP through an activated phospho-Asp-tRNA(Asn) or phospho-Glu-tRNA(Gln). The polypeptide is Aspartyl/glutamyl-tRNA(Asn/Gln) amidotransferase subunit B (Hahella chejuensis (strain KCTC 2396)).